A 776-amino-acid polypeptide reads, in one-letter code: DNA topoisomerase 1 (776 aa).

One can recognise a Toprim domain in the interval 1-111; it reads MKLVIVESPA…VESDDFFKRV (111 aa). Residues Glu7 and Asp80 each contribute to the Mg(2+) site. A Topo IA-type catalytic domain is found at 132 to 568; the sequence is DTNLVNAQQA…FWRGFNHNIE (437 aa). The interaction with DNA stretch occupies residues 166–171; sequence SAGRVQ. Tyr304 functions as the O-(5'-phospho-DNA)-tyrosine intermediate in the catalytic mechanism. Residues 600–627 form a C4-type zinc finger; it reads CPSCKTGQLSLKLGKFGAFLACSNYPEC.

It belongs to the type IA topoisomerase family. As to quaternary structure, monomer. It depends on Mg(2+) as a cofactor.

The catalysed reaction is ATP-independent breakage of single-stranded DNA, followed by passage and rejoining.. In terms of biological role, releases the supercoiling and torsional tension of DNA, which is introduced during the DNA replication and transcription, by transiently cleaving and rejoining one strand of the DNA duplex. Introduces a single-strand break via transesterification at a target site in duplex DNA. The scissile phosphodiester is attacked by the catalytic tyrosine of the enzyme, resulting in the formation of a DNA-(5'-phosphotyrosyl)-enzyme intermediate and the expulsion of a 3'-OH DNA strand. The free DNA strand then undergoes passage around the unbroken strand, thus removing DNA supercoils. Finally, in the religation step, the DNA 3'-OH attacks the covalent intermediate to expel the active-site tyrosine and restore the DNA phosphodiester backbone. This Rickettsia prowazekii (strain Madrid E) protein is DNA topoisomerase 1.